A 339-amino-acid chain; its full sequence is Serine/threonine-protein kinase pdik1l-A (339 aa).

The Protein kinase domain maps to 8-332; that stretch reads YDLIREVGRG…LELKLIQIAF (325 aa). Residues 14 to 22 and Lys-37 contribute to the ATP site; that span reads VGRGSYGVV. Residue Asp-164 is the Proton acceptor of the active site.

This sequence belongs to the protein kinase superfamily. Ser/Thr protein kinase family.

The protein localises to the nucleus. The catalysed reaction is L-seryl-[protein] + ATP = O-phospho-L-seryl-[protein] + ADP + H(+). The enzyme catalyses L-threonyl-[protein] + ATP = O-phospho-L-threonyl-[protein] + ADP + H(+). This is Serine/threonine-protein kinase pdik1l-A (pdik1-a) from Xenopus laevis (African clawed frog).